The sequence spans 225 residues: Thymidine kinase (225 aa).

An ATP-binding site is contributed by 15–22 (GSMFSGKT). The disordered stretch occupies residues 85 to 110 (KKQNHRTTTQCRSGDGTNNPGGVIPS). Residues 90–104 (RTTTQCRSGDGTNNP) show a composition bias toward polar residues. An ATP-binding site is contributed by 121 to 124 (DEAN). Glu-122 acts as the Proton acceptor in catalysis. Zn(2+) contacts are provided by Cys-178, Cys-181, Cys-216, and Cys-219.

This sequence belongs to the thymidine kinase family. As to quaternary structure, homotetramer.

The protein localises to the cytoplasm. The enzyme catalyses thymidine + ATP = dTMP + ADP + H(+). This chain is Thymidine kinase, found in Haloquadratum walsbyi (strain DSM 16790 / HBSQ001).